A 391-amino-acid polypeptide reads, in one-letter code: Chalcone synthase (391 aa).

Cys-164 is an active-site residue.

This sequence belongs to the thiolase-like superfamily. Chalcone/stilbene synthases family.

It carries out the reaction (E)-4-coumaroyl-CoA + 3 malonyl-CoA + 3 H(+) = 2',4,4',6'-tetrahydroxychalcone + 3 CO2 + 4 CoA. The protein operates within secondary metabolite biosynthesis; flavonoid biosynthesis. Functionally, the primary product of this enzyme is 4,2',4',6'-tetrahydroxychalcone (also termed naringenin-chalcone or chalcone) which can under specific conditions spontaneously isomerize into naringenin. In Dianthus monspessulanus, this protein is Chalcone synthase (CHS).